A 475-amino-acid chain; its full sequence is E3 ubiquitin-protein ligase TRIM62 (475 aa).

The segment at Cys-11–Arg-54 adopts an RING-type zinc-finger fold. Residues Arg-88–Ile-128 form a B box-type zinc finger. Residues Cys-93, His-96, Cys-114, and His-120 each contribute to the Zn(2+) site. The stretch at Gly-127–Arg-241 forms a coiled coil. The B30.2/SPRY domain occupies Pro-277–Ile-475.

The protein belongs to the TRIM/RBCC family. As to quaternary structure, interacts with the ubiquitin-conjugating enzyme, UBE2D2. Polyubiquitinated, autoubiquitinated in the presence of UBE2D2.

The protein resides in the cytoplasm. The catalysed reaction is S-ubiquitinyl-[E2 ubiquitin-conjugating enzyme]-L-cysteine + [acceptor protein]-L-lysine = [E2 ubiquitin-conjugating enzyme]-L-cysteine + N(6)-ubiquitinyl-[acceptor protein]-L-lysine.. Its pathway is protein modification; protein ubiquitination. Functionally, E3 ubiquitin ligase that plays a role in antifungal immunity by mediating 'Lys-27'-linked ubiquitination of CARD9 downstream of C-type lectin receptors; leading to CARD9 activation, followed by activation of NF-kappa-B and MAP kinase p38 pathways. E3 ubiquitin ligase activity is dependent on E2 ubiquitin-conjugating enzyme UBE2D2. This Homo sapiens (Human) protein is E3 ubiquitin-protein ligase TRIM62.